We begin with the raw amino-acid sequence, 513 residues long: Ribonuclease Y (513 aa).

Residues 6–26 (YIIIAVVIIIICVILGLYVVD) traverse the membrane as a helical segment. A disordered region spans residues 35-59 (EASKEARRLKEEAERDAEAKKKEAI). The KH domain maps to 203 to 288 (TVHVVNLPND…EMVEKAKKEV (86 aa)). One can recognise an HD domain in the interval 329–422 (VLKHSIEVSH…VQAADAISAA (94 aa)).

Belongs to the RNase Y family.

It localises to the cell membrane. Functionally, endoribonuclease that initiates mRNA decay. The sequence is that of Ribonuclease Y from Clostridium botulinum (strain Okra / Type B1).